The following is an 89-amino-acid chain: Small ribosomal subunit protein uS15 (89 aa).

It belongs to the universal ribosomal protein uS15 family. In terms of assembly, part of the 30S ribosomal subunit. Forms a bridge to the 50S subunit in the 70S ribosome, contacting the 23S rRNA.

Its function is as follows. One of the primary rRNA binding proteins, it binds directly to 16S rRNA where it helps nucleate assembly of the platform of the 30S subunit by binding and bridging several RNA helices of the 16S rRNA. Functionally, forms an intersubunit bridge (bridge B4) with the 23S rRNA of the 50S subunit in the ribosome. The polypeptide is Small ribosomal subunit protein uS15 (Corynebacterium efficiens (strain DSM 44549 / YS-314 / AJ 12310 / JCM 11189 / NBRC 100395)).